Here is a 145-residue protein sequence, read N- to C-terminus: Neuropeptide-like protein 68 (145 aa).

The N-terminal stretch at 1-15 is a signal peptide; sequence MLLVLLFSLFSVGFG. The segment at 41–65 is disordered; sequence SSSSEDDTPDFPSLRDKRGVDPMSI.

Its subcellular location is the secreted. This Caenorhabditis elegans protein is Neuropeptide-like protein 68.